The following is a 126-amino-acid chain: Hydrogenase maturation factor HypA (126 aa).

Histidine 2 lines the Ni(2+) pocket. Positions 78, 81, 97, and 100 each coordinate Zn(2+).

The protein belongs to the HypA/HybF family.

In terms of biological role, involved in the maturation of [NiFe] hydrogenases. Required for nickel insertion into the metal center of the hydrogenase. In Methanococcus maripaludis (strain C5 / ATCC BAA-1333), this protein is Hydrogenase maturation factor HypA.